The chain runs to 241 residues: tRNA (guanine-N(1)-)-methyltransferase (241 aa).

Residues G108 and 127-132 each bind S-adenosyl-L-methionine; that span reads LGDYVL.

It belongs to the RNA methyltransferase TrmD family. In terms of assembly, homodimer.

Its subcellular location is the cytoplasm. It carries out the reaction guanosine(37) in tRNA + S-adenosyl-L-methionine = N(1)-methylguanosine(37) in tRNA + S-adenosyl-L-homocysteine + H(+). Functionally, specifically methylates guanosine-37 in various tRNAs. The sequence is that of tRNA (guanine-N(1)-)-methyltransferase from Streptococcus suis (strain 98HAH33).